Reading from the N-terminus, the 347-residue chain is NADH-ubiquinone oxidoreductase chain 2 (347 aa).

10 helical membrane passes run 3-23 (PLALSLILTTLLAGTLITMMS), 25-45 (HWLTAWMGLEMNMLTMIPILM), 59-79 (YFMTQATASMMLMMALTINLM), 93-115 (VASNVALMALMTKLGSAPFHFWV), 150-170 (NTNLIYLSGLLSILIGGWGGL), 178-198 (ILAYSSISHMGWMLIILPFNP), 200-220 (LTLLNLAIYILLTLSIFMILA), 240-260 (MTIMLMTTLLSLGGLPPLSGF), 274-294 (NSIIMPLTMAIMTLLNMYFYM), and 326-346 (LPTLITLSNMLLPLTPMISML).

It belongs to the complex I subunit 2 family. As to quaternary structure, core subunit of respiratory chain NADH dehydrogenase (Complex I) which is composed of 45 different subunits. Interacts with TMEM242.

The protein localises to the mitochondrion inner membrane. It catalyses the reaction a ubiquinone + NADH + 5 H(+)(in) = a ubiquinol + NAD(+) + 4 H(+)(out). In terms of biological role, core subunit of the mitochondrial membrane respiratory chain NADH dehydrogenase (Complex I) which catalyzes electron transfer from NADH through the respiratory chain, using ubiquinone as an electron acceptor. Essential for the catalytic activity and assembly of complex I. In Mammuthus primigenius (Siberian woolly mammoth), this protein is NADH-ubiquinone oxidoreductase chain 2.